We begin with the raw amino-acid sequence, 178 residues long: Probetacellulin (178 aa).

The first 31 residues, 1-31 (MDRAARCSGASSLPLLLALALGLVILHCVVA), serve as a signal peptide directing secretion. Topologically, residues 32-118 (DGNSTRSPET…LFYLRGDRGQ (87 aa)) are extracellular. N34 carries N-linked (GlcNAc...) asparagine glycosylation. The EGF-like domain occupies 65-105 (HFSRCPKQYKHYCIKGRCRFVVAEQTPSCVCDEGYIGARCE). Disulfide bonds link C69–C82, C77–C93, and C95–C104. The propeptide at 112–178 (LRGDRGQILV…NEDIEETNIA (67 aa)) is removed in mature form. A helical membrane pass occupies residues 119–139 (ILVICLIAVMVVFIILVIGVC). Topologically, residues 140 to 178 (TCCHPLRKRRKRKKKEEEMETLGKDITPINEDIEETNIA) are cytoplasmic.

Monomer. Interacts with EGFR and ERBB4. As to expression, synthesized in several tissues and tumor cells. Predominantly expressed in pancreas and small intestine.

It is found in the secreted. It localises to the extracellular space. The protein resides in the cell membrane. In terms of biological role, growth factor that binds to EGFR, ERBB4 and other EGF receptor family members. Potent mitogen for retinal pigment epithelial cells and vascular smooth muscle cells. This chain is Probetacellulin (BTC), found in Homo sapiens (Human).